The following is a 417-amino-acid chain: Chaperone SurA (417 aa).

Positions 1 to 12 (MGAALLCSFAHA) are cleaved as a signal peptide. 2 consecutive PpiC domains span residues 163-264 (SEEY…KLEE) and 273-372 (RDEV…QVLG).

It is found in the periplasm. It catalyses the reaction [protein]-peptidylproline (omega=180) = [protein]-peptidylproline (omega=0). Its function is as follows. Chaperone involved in the correct folding and assembly of outer membrane proteins. Recognizes specific patterns of aromatic residues and the orientation of their side chains, which are found more frequently in integral outer membrane proteins. May act in both early periplasmic and late outer membrane-associated steps of protein maturation. This Pseudomonas aeruginosa (strain ATCC 15692 / DSM 22644 / CIP 104116 / JCM 14847 / LMG 12228 / 1C / PRS 101 / PAO1) protein is Chaperone SurA.